Reading from the N-terminus, the 201-residue chain is Recombination protein RecR (201 aa).

The C4-type zinc finger occupies 60 to 75 (CSCCGNVDTSDPCTIC). The Toprim domain maps to 83–178 (ATLIVVEDVS…RVTRLAHGVP (96 aa)).

It belongs to the RecR family.

Functionally, may play a role in DNA repair. It seems to be involved in an RecBC-independent recombinational process of DNA repair. It may act with RecF and RecO. The protein is Recombination protein RecR of Brucella melitensis biotype 1 (strain ATCC 23456 / CCUG 17765 / NCTC 10094 / 16M).